The sequence spans 245 residues: tRNA1(Val) (adenine(37)-N6)-methyltransferase (245 aa).

This sequence belongs to the methyltransferase superfamily. tRNA (adenine-N(6)-)-methyltransferase family.

The protein resides in the cytoplasm. The enzyme catalyses adenosine(37) in tRNA1(Val) + S-adenosyl-L-methionine = N(6)-methyladenosine(37) in tRNA1(Val) + S-adenosyl-L-homocysteine + H(+). Specifically methylates the adenine in position 37 of tRNA(1)(Val) (anticodon cmo5UAC). This Escherichia coli (strain K12) protein is tRNA1(Val) (adenine(37)-N6)-methyltransferase (yfiC).